The sequence spans 292 residues: MGSSLWTCLILLSLASASFAANPRTPIDVPFGRNYVPTWAFDHIKYLNGGSEIQLHLDKYTGTGFQSKGSYLFGHFSMYIKLVPGDSAGTVTAFYLSSTNAEHDEIDFEFLGNRTGQPYILQTNVFTGGKGDREQRIYLWFDPTTQYHRYSVLWNMYQIVFYVDDYPIRVFKNSNDLGVKFPFNQPMKIYNSLWNADDWATRGGLEKTDWSKAPFIASYKGFHIDGCEASVNAKFCDTQGKRWWDQPEFRDLDAAQWQKLAWVRNKYTIYNYCTDRKRYSQVPPECTRDRDI.

The N-terminal stretch at M1–A20 is a signal peptide. The GH16 domain occupies A21 to Y219. The active-site Nucleophile is the E105. The active-site Proton donor is E109. E109 lines the xyloglucan pocket. An N-linked (GlcNAc...) asparagine glycan is attached at N113. Xyloglucan is bound by residues Q122 to N124, D132 to E134, D198 to W199, and G203. 2 disulfides stabilise this stretch: C227–C236 and C273–C286. Xyloglucan is bound at residue R278.

Belongs to the glycosyl hydrolase 16 family. XTH group 1 subfamily. In terms of processing, contains at least one intrachain disulfide bond essential for its enzymatic activity. Predominantly expressed in the phloem fibers of growing internodes. Expressed in xylem cells in the basal part of the internode. In the internode, it is expressed closer to the top of the internode compared to XTHB.

It is found in the secreted. The protein localises to the cell wall. It localises to the extracellular space. The protein resides in the apoplast. It catalyses the reaction breaks a beta-(1-&gt;4) bond in the backbone of a xyloglucan and transfers the xyloglucanyl segment on to O-4 of the non-reducing terminal glucose residue of an acceptor, which can be a xyloglucan or an oligosaccharide of xyloglucan.. Catalyzes xyloglucan endohydrolysis (XEH) and/or endotransglycosylation (XET). Cleaves and religates xyloglucan polymers, an essential constituent of the primary cell wall, and thereby participates in cell wall construction of growing tissues. In Phaseolus angularis (Azuki bean), this protein is Xyloglucan endotransglucosylase/hydrolase protein A (XTHA).